Here is a 376-residue protein sequence, read N- to C-terminus: Queuine tRNA-ribosyltransferase (376 aa).

Aspartate 89 serves as the catalytic Proton acceptor. Substrate-binding positions include 89–93, aspartate 143, glutamine 194, and glycine 221; that span reads DSGGF. Residues 252–258 are RNA binding; the sequence is GVGTPSN. Aspartate 271 functions as the Nucleophile in the catalytic mechanism. An RNA binding; important for wobble base 34 recognition region spans residues 276-280; the sequence is ARNGR. Zn(2+) is bound by residues cysteine 309, cysteine 311, cysteine 314, and histidine 340.

The protein belongs to the queuine tRNA-ribosyltransferase family. As to quaternary structure, homodimer. Within each dimer, one monomer is responsible for RNA recognition and catalysis, while the other monomer binds to the replacement base PreQ1. Zn(2+) is required as a cofactor.

The catalysed reaction is 7-aminomethyl-7-carbaguanine + guanosine(34) in tRNA = 7-aminomethyl-7-carbaguanosine(34) in tRNA + guanine. It participates in tRNA modification; tRNA-queuosine biosynthesis. Its function is as follows. Catalyzes the base-exchange of a guanine (G) residue with the queuine precursor 7-aminomethyl-7-deazaguanine (PreQ1) at position 34 (anticodon wobble position) in tRNAs with GU(N) anticodons (tRNA-Asp, -Asn, -His and -Tyr). Catalysis occurs through a double-displacement mechanism. The nucleophile active site attacks the C1' of nucleotide 34 to detach the guanine base from the RNA, forming a covalent enzyme-RNA intermediate. The proton acceptor active site deprotonates the incoming PreQ1, allowing a nucleophilic attack on the C1' of the ribose to form the product. After dissociation, two additional enzymatic reactions on the tRNA convert PreQ1 to queuine (Q), resulting in the hypermodified nucleoside queuosine (7-(((4,5-cis-dihydroxy-2-cyclopenten-1-yl)amino)methyl)-7-deazaguanosine). The polypeptide is Queuine tRNA-ribosyltransferase (Clostridium acetobutylicum (strain ATCC 824 / DSM 792 / JCM 1419 / IAM 19013 / LMG 5710 / NBRC 13948 / NRRL B-527 / VKM B-1787 / 2291 / W)).